We begin with the raw amino-acid sequence, 164 residues long: Putative pre-16S rRNA nuclease (164 aa).

The protein belongs to the YqgF nuclease family.

The protein localises to the cytoplasm. In terms of biological role, could be a nuclease involved in processing of the 5'-end of pre-16S rRNA. In Caulobacter sp. (strain K31), this protein is Putative pre-16S rRNA nuclease.